The chain runs to 820 residues: Phenylalanine--tRNA ligase beta subunit (820 aa).

The tRNA-binding domain maps to 42-154; that stretch reads KGGLEGLVIG…EDAVPGTLAK (113 aa). One can recognise a B5 domain in the interval 413-489; that stretch reads AQDFIVELTY…RIYGYNNVEI (77 aa). D467, D473, E476, and D477 together coordinate Mg(2+). In terms of domain architecture, FDX-ACB spans 727–820; that stretch reads SKFPAVKRDL…LEDKLGAKLR (94 aa).

It belongs to the phenylalanyl-tRNA synthetase beta subunit family. Type 1 subfamily. Tetramer of two alpha and two beta subunits. The cofactor is Mg(2+).

Its subcellular location is the cytoplasm. The enzyme catalyses tRNA(Phe) + L-phenylalanine + ATP = L-phenylalanyl-tRNA(Phe) + AMP + diphosphate + H(+). The sequence is that of Phenylalanine--tRNA ligase beta subunit from Bacteroides fragilis (strain ATCC 25285 / DSM 2151 / CCUG 4856 / JCM 11019 / LMG 10263 / NCTC 9343 / Onslow / VPI 2553 / EN-2).